A 418-amino-acid polypeptide reads, in one-letter code: MARAAFLFKTVGFGGLQNVPINDELASHLLRAGNSPWQLTQFLDWISLGRGLATSALVPTAGSRYYQMSCLLSGTLQIPFRPNHRWGDVRFLRLVWSAPTLDGLVIAPPPILAQPAIQAQADRAYDCDDYPFLARDPRFKHRVYQQLSAITLLNLTGFGPISYVRVDEDMWSGDVSQLLMNYFGHTFAEIAYTLCQASANRPWEHDGTYARMTQIVLSLFWLSYVGVIHQHNTYRTFYFQCNRRGDAAEVWILSCSLTHSAQIRAGNRSLFVMPTSPDWNMDVNLILSSTLTGCLCSGSQLPLIDNNSVPNVSRNIHGWTGRGGNQLHGFQVRRMITEYCDRLRRDGVMTPAQQMQIEALGDQTQQFKRDKLEAWALEDDQYNRAHPNSTMFRTKPFTNAQWGRGNTAATSAAIAALI.

Belongs to the orthoreovirus sigma-1 protein family. As to quaternary structure, interacts with protein mu-NS; in viral inclusions.

Its subcellular location is the virion. Its function is as follows. Inner capsid (core) component. The sequence is that of Inner capsid protein sigma-2 (S2) from Mammalia (T2J).